We begin with the raw amino-acid sequence, 306 residues long: Homoserine O-acetyltransferase (306 aa).

The Acyl-thioester intermediate role is filled by Cys-142. Substrate-binding residues include Lys-163 and Ser-192. His-235 (proton acceptor) is an active-site residue. Glu-237 is an active-site residue. A substrate-binding site is contributed by Arg-249.

This sequence belongs to the MetA family.

It is found in the cytoplasm. The enzyme catalyses L-homoserine + acetyl-CoA = O-acetyl-L-homoserine + CoA. Its pathway is amino-acid biosynthesis; L-methionine biosynthesis via de novo pathway; O-acetyl-L-homoserine from L-homoserine: step 1/1. Functionally, transfers an acetyl group from acetyl-CoA to L-homoserine, forming acetyl-L-homoserine. In Brucella melitensis biotype 1 (strain ATCC 23456 / CCUG 17765 / NCTC 10094 / 16M), this protein is Homoserine O-acetyltransferase.